A 289-amino-acid polypeptide reads, in one-letter code: Undecaprenyl-diphosphatase (289 aa).

The next 8 helical transmembrane spans lie at 23-43 (LFLG…TAHL), 56-76 (GVAV…AYFW), 104-124 (SAIV…KLFW), 135-155 (IPAI…AENV), 165-185 (LSFW…IPGV), 210-230 (FLLG…QAFG), 235-255 (VDVF…WIAI), and 269-289 (IFIT…YLAF).

The protein belongs to the UppP family.

It localises to the cell inner membrane. It carries out the reaction di-trans,octa-cis-undecaprenyl diphosphate + H2O = di-trans,octa-cis-undecaprenyl phosphate + phosphate + H(+). Catalyzes the dephosphorylation of undecaprenyl diphosphate (UPP). Confers resistance to bacitracin. The protein is Undecaprenyl-diphosphatase of Prochlorococcus marinus (strain SARG / CCMP1375 / SS120).